We begin with the raw amino-acid sequence, 522 residues long: Pectinesterase/pectinesterase inhibitor PPE8B (522 aa).

Positions Met1–Ser30 are cleaved as a signal peptide. The pectinesterase inhibitor PPE8B stretch occupies residues Ser31–Gln174. Asn105, Asn118, Asn119, Asn218, Asn221, and Asn274 each carry an N-linked (GlcNAc...) asparagine glycan. The segment at Asp208–Asn506 is pectinesterase PPE8B. The substrate site is built by Thr283 and Gln313. Asp336 acts as the Proton donor; for pectinesterase activity in catalysis. Residues Cys350 and Cys370 are joined by a disulfide bond. Asp357 acts as the Nucleophile; for pectinesterase activity in catalysis. Residue Asn405 is glycosylated (N-linked (GlcNAc...) asparagine). Substrate-binding residues include Arg426 and Trp428. Residues Asn489 and Asn496 are each glycosylated (N-linked (GlcNAc...) asparagine).

It in the N-terminal section; belongs to the PMEI family. In the C-terminal section; belongs to the pectinesterase family.

It is found in the secreted. It localises to the cell wall. The enzyme catalyses [(1-&gt;4)-alpha-D-galacturonosyl methyl ester](n) + n H2O = [(1-&gt;4)-alpha-D-galacturonosyl](n) + n methanol + n H(+). It functions in the pathway glycan metabolism; pectin degradation; 2-dehydro-3-deoxy-D-gluconate from pectin: step 1/5. May have roles in the deposition of pectin in developing tissues and in the wall loosening and cell separation that occurs in cell expansion, fruit ripening and abscission. The protein is Pectinesterase/pectinesterase inhibitor PPE8B of Prunus persica (Peach).